We begin with the raw amino-acid sequence, 594 residues long: Elongation factor 4 (594 aa).

One can recognise a tr-type G domain in the interval 2–184 (KNIRNFSIIA…TIVAKVPAPE (183 aa)). GTP contacts are provided by residues 14–19 (DHGKST) and 131–134 (NKID).

It belongs to the TRAFAC class translation factor GTPase superfamily. Classic translation factor GTPase family. LepA subfamily.

The protein localises to the cell inner membrane. The catalysed reaction is GTP + H2O = GDP + phosphate + H(+). Required for accurate and efficient protein synthesis under certain stress conditions. May act as a fidelity factor of the translation reaction, by catalyzing a one-codon backward translocation of tRNAs on improperly translocated ribosomes. Back-translocation proceeds from a post-translocation (POST) complex to a pre-translocation (PRE) complex, thus giving elongation factor G a second chance to translocate the tRNAs correctly. Binds to ribosomes in a GTP-dependent manner. This chain is Elongation factor 4, found in Francisella tularensis subsp. holarctica (strain FTNF002-00 / FTA).